A 100-amino-acid polypeptide reads, in one-letter code: Eukaryotic translation initiation factor 4E-binding protein 3 (100 aa).

The YXXXXLphi motif signature appears at 40–46 (YDRKFLL). The segment at 81-100 (LKEQETEEEIPDDAQFEMDI) is disordered. Residues 85 to 100 (ETEEEIPDDAQFEMDI) show a composition bias toward acidic residues. The short motif at 96-100 (FEMDI) is the TOS motif element.

Belongs to the eIF4E-binding protein family. As to quaternary structure, interacts with EIF4E. Interacts with RPA2 (in unphosphorylated form via N-terminus); the interaction enhances EIF4EBP3-mediated inhibition of EIF4E-mediated mRNA nuclear export. Post-translationally, phosphorylated. In terms of tissue distribution, expression is highest in skeletal muscle, heart, kidney, and pancreas, whereas there is very little expression in brain and thymus.

The protein resides in the cytoplasm. Its subcellular location is the nucleus. Functionally, repressor of translation initiation that regulates EIF4E activity by preventing its assembly into the eIF4F complex: the hypophosphorylated form competes with EIF4G1/EIF4G3 and strongly binds to EIF4E, leading to repression of translation. In contrast, the hyperphosphorylated form dissociates from EIF4E, allowing interaction between EIF4G1/EIF4G3 and EIF4E, leading to initiation of translation. Inhibits EIF4E-mediated mRNA nuclear export. The sequence is that of Eukaryotic translation initiation factor 4E-binding protein 3 (EIF4EBP3) from Homo sapiens (Human).